A 29-amino-acid polypeptide reads, in one-letter code: Brevinin-2Tc (29 aa).

C23 and C29 are disulfide-bonded.

This sequence belongs to the frog skin active peptide (FSAP) family. Brevinin subfamily. In terms of tissue distribution, expressed by the skin glands.

It localises to the secreted. Antibacterial activity against representative Gram-negative and Gram-positive bacteria. The protein is Brevinin-2Tc of Rana temporaria (European common frog).